Reading from the N-terminus, the 569-residue chain is Atlastin-2 (569 aa).

The interval 1-49 is N-terminal hypervariable region (HVR); sequence MAEGGSLRNRTRFGSRSNEAMNHVDYPDENFVEEIQLNSDTEVMEKPRP. Topologically, residues 1–464 are cytoplasmic; it reads MAEGGSLRNR…NIFYAARTPA (464 aa). The region spanning 80–324 is the GB1/RHD3-type G domain; it reads DLNVVVLSVA…LVPLLLAPEN (245 aa). Arg-93, Lys-94, Gly-95, Lys-96, Ser-97, Phe-98, Gln-163, Arg-232, and Asp-233 together coordinate GDP. Residues Arg-93, Lys-94, Gly-95, Lys-96, Ser-97, and Phe-98 each contribute to the GTP site. Residue Ser-97 participates in Mg(2+) binding. GTP-binding residues include Arg-232 and Asp-233. Residues 244 to 272 are a coiled coil; sequence LEGGNKFLEKRLQVKQNQHEELQNVRKHI. GDP-binding residues include Val-291 and Asn-294. Residue Val-291 coordinates GTP. The 3HB (three-helix bundle) domain stretch occupies residues 362 to 453; the sequence is MLQATAEANN…YANFLKHNDG (92 aa). Positions 454–462 are linker; it reads KNIFYAART. Residues 465-485 form a helical membrane-spanning segment; the sequence is TLFAVMFAMYIISGLTGFIGM. Residues 486-487 lie on the Lumenal side of the membrane; sequence NS. Residues 488–508 form a helical membrane-spanning segment; the sequence is IATICNLIMGLTLLSFCTWAY. Topologically, residues 509–569 are cytoplasmic; sequence VKYSGEFREL…DQVSGRLKTN (61 aa). An autoinhibitory domain region spans residues 535 to 569; that stretch reads KPLSDNLMEDNIRQTVRNSIKAGLTDQVSGRLKTN.

The protein belongs to the TRAFAC class dynamin-like GTPase superfamily. GB1/RHD3 GTPase family. GB1 subfamily. As to quaternary structure, monomeric and homodimeric. The homodimer, transiently formed by two molecules on opposing membranes, is the active form mediating ER membrane fusion.

It localises to the endoplasmic reticulum membrane. It carries out the reaction GTP + H2O = GDP + phosphate + H(+). Its function is as follows. Atlastin-2 (ATL2) is a membrane-anchored GTPase that mediates the GTP-dependent fusion of endoplasmic reticulum (ER) membranes, maintaining the continuous ER network. It facilitates the formation of three-way junctions where ER tubules intersect. Two atlastin-2 on neighboring ER tubules bind GTP and form loose homodimers through the GB1/RHD3-type G domains and 3HB regions. Upon GTP hydrolysis, the 3HB regions tighten, pulling the membranes together to drive their fusion. After fusion, the homodimer disassembles upon release of inorganic phosphate (Pi). Subsequently, GDP dissociates, resetting the monomers to a conformation ready for a new fusion cycle. The polypeptide is Atlastin-2 (atl2) (Xenopus laevis (African clawed frog)).